Reading from the N-terminus, the 258-residue chain is Tryptophan synthase alpha chain (258 aa).

Residues Glu-47 and Asp-58 each act as proton acceptor in the active site.

Belongs to the TrpA family. Tetramer of two alpha and two beta chains.

It carries out the reaction (1S,2R)-1-C-(indol-3-yl)glycerol 3-phosphate + L-serine = D-glyceraldehyde 3-phosphate + L-tryptophan + H2O. Its pathway is amino-acid biosynthesis; L-tryptophan biosynthesis; L-tryptophan from chorismate: step 5/5. The alpha subunit is responsible for the aldol cleavage of indoleglycerol phosphate to indole and glyceraldehyde 3-phosphate. This is Tryptophan synthase alpha chain from Bacillus mycoides (strain KBAB4) (Bacillus weihenstephanensis).